The chain runs to 195 residues: Protein GrpE (195 aa).

The protein belongs to the GrpE family. As to quaternary structure, homodimer.

The protein localises to the cytoplasm. Its function is as follows. Participates actively in the response to hyperosmotic and heat shock by preventing the aggregation of stress-denatured proteins, in association with DnaK and GrpE. It is the nucleotide exchange factor for DnaK and may function as a thermosensor. Unfolded proteins bind initially to DnaJ; upon interaction with the DnaJ-bound protein, DnaK hydrolyzes its bound ATP, resulting in the formation of a stable complex. GrpE releases ADP from DnaK; ATP binding to DnaK triggers the release of the substrate protein, thus completing the reaction cycle. Several rounds of ATP-dependent interactions between DnaJ, DnaK and GrpE are required for fully efficient folding. The chain is Protein GrpE from Francisella tularensis subsp. tularensis (strain FSC 198).